The sequence spans 333 residues: MFNLKNRNFLTLMDFTPKEINYFLDLARDLKRAKYTGTEVQRLKGKNIALIFEKASTRTRCAFEVGAKDQGAHVTYLGPTGSHIGKKESAADTARVLGRMYDGIEYRGFGQEIVETLAEYAGVPVWNGLTDEDHPTQILADFLTIREHFNKPLNEIKFAYVGDGANNMANALMIGAVKMGMDFRIVSPKEIPTDAALVAKCKEIAAETGAKVTITDNIEEGVKGCDVLYTDVWVSMGEPDSVWESKIKLLTPYRVDMNMIKMTGNPDAKFMHCLPAFHDEETAVGKEIKEKYGLSEMEVSHELFESKYSIVFDEAENRMHTIKAVMVATLGDQ.

Residues 56-59, Arg107, and 134-137 each bind carbamoyl phosphate; these read STRT and HPTQ. Residues Asn167, Asp231, and 235–236 each bind L-ornithine; that span reads SM. Carbamoyl phosphate contacts are provided by residues 273 to 274 and Arg318; that span reads CL.

This sequence belongs to the aspartate/ornithine carbamoyltransferase superfamily. OTCase family.

The protein localises to the cytoplasm. It catalyses the reaction carbamoyl phosphate + L-ornithine = L-citrulline + phosphate + H(+). It functions in the pathway amino-acid degradation; L-arginine degradation via ADI pathway; carbamoyl phosphate from L-arginine: step 2/2. In terms of biological role, reversibly catalyzes the transfer of the carbamoyl group from carbamoyl phosphate (CP) to the N(epsilon) atom of ornithine (ORN) to produce L-citrulline. The sequence is that of Ornithine carbamoyltransferase from Clostridium botulinum (strain ATCC 19397 / Type A).